Reading from the N-terminus, the 245-residue chain is MLDTAKSSIRQQQHPLISRLADLILSYWEKYLELDPYQLPDGLGYVEGRLEGEKLVIENHCYHTPQFRKMHLELAKLGNNLDILHCVMFPNPHYPLPMFGCDIVASKAGVSAAIADLSPTNPQGTLPTTYQKVLSSLPKRDFSQRRDLPPWGDIFSEFCLFIRPTNSTEETFFLERVEQFLELHCRQSLIAQPLSSNEQALYLAGQYNYCSQQQKNDKTRRVLEKAFGAEWADKYINLVLFDLPD.

This sequence belongs to the HY2 family.

The enzyme catalyses (2R,3Z)-phycocyanobilin + 4 oxidized [2Fe-2S]-[ferredoxin] = biliverdin IXalpha + 4 reduced [2Fe-2S]-[ferredoxin] + 4 H(+). Functionally, catalyzes the four-electron reduction of biliverdin IX-alpha (2-electron reduction at both the A and D rings); the reaction proceeds via an isolatable 2-electron intermediate, 181,182-dihydrobiliverdin. The sequence is that of Phycocyanobilin:ferredoxin oxidoreductase from Gloeothece citriformis (strain PCC 7424) (Cyanothece sp. (strain PCC 7424)).